Here is a 749-residue protein sequence, read N- to C-terminus: 5-methyltetrahydropteroyltriglutamate--homocysteine methyltransferase (749 aa).

5-methyltetrahydropteroyltri-L-glutamate is bound by residues 15–18 (RELK) and lysine 114. L-homocysteine is bound by residues 425–427 (IGS) and glutamate 478. Residues 425-427 (IGS) and glutamate 478 each bind L-methionine. Position 555 (tryptophan 555) interacts with 5-methyltetrahydropteroyltri-L-glutamate. Residue aspartate 593 coordinates L-homocysteine. Aspartate 593 is a binding site for L-methionine. 5-methyltetrahydropteroyltri-L-glutamate is bound at residue glutamate 599. Zn(2+) contacts are provided by histidine 636, cysteine 638, and glutamate 660. Histidine 689 (proton donor) is an active-site residue. Residue cysteine 721 participates in Zn(2+) binding.

This sequence belongs to the vitamin-B12 independent methionine synthase family. Zn(2+) serves as cofactor.

It catalyses the reaction 5-methyltetrahydropteroyltri-L-glutamate + L-homocysteine = tetrahydropteroyltri-L-glutamate + L-methionine. Its pathway is amino-acid biosynthesis; L-methionine biosynthesis via de novo pathway; L-methionine from L-homocysteine (MetE route): step 1/1. Catalyzes the transfer of a methyl group from 5-methyltetrahydrofolate to homocysteine resulting in methionine formation. This is 5-methyltetrahydropteroyltriglutamate--homocysteine methyltransferase from Streptococcus suis (strain 05ZYH33).